Consider the following 183-residue polypeptide: tRNA-splicing endonuclease (183 aa).

Catalysis depends on residues Tyr120, His128, and Lys159.

This sequence belongs to the tRNA-intron endonuclease family. Archaeal short subfamily. In terms of assembly, homotetramer; although the tetramer contains four active sites, only two participate in the cleavage. Therefore, it should be considered as a dimer of dimers.

The enzyme catalyses pretRNA = a 3'-half-tRNA molecule with a 5'-OH end + a 5'-half-tRNA molecule with a 2',3'-cyclic phosphate end + an intron with a 2',3'-cyclic phosphate and a 5'-hydroxyl terminus.. Its function is as follows. Endonuclease that removes tRNA introns. Cleaves pre-tRNA at the 5'- and 3'-splice sites to release the intron. The products are an intron and two tRNA half-molecules bearing 2',3' cyclic phosphate and 5'-OH termini. Recognizes a pseudosymmetric substrate in which 2 bulged loops of 3 bases are separated by a stem of 4 bp. This chain is tRNA-splicing endonuclease, found in Pyrobaculum arsenaticum (strain DSM 13514 / JCM 11321 / PZ6).